The following is a 324-amino-acid chain: Ribosomal RNA small subunit methyltransferase H (324 aa).

Residues 47-49 (GGH), Asp-67, Leu-96, Asp-115, and Gln-122 contribute to the S-adenosyl-L-methionine site.

Belongs to the methyltransferase superfamily. RsmH family.

Its subcellular location is the cytoplasm. It carries out the reaction cytidine(1402) in 16S rRNA + S-adenosyl-L-methionine = N(4)-methylcytidine(1402) in 16S rRNA + S-adenosyl-L-homocysteine + H(+). Specifically methylates the N4 position of cytidine in position 1402 (C1402) of 16S rRNA. This Halorhodospira halophila (strain DSM 244 / SL1) (Ectothiorhodospira halophila (strain DSM 244 / SL1)) protein is Ribosomal RNA small subunit methyltransferase H.